We begin with the raw amino-acid sequence, 486 residues long: Protein nucleotidyltransferase YdiU (486 aa).

The ATP site is built by G90, G92, R93, K113, D125, G126, R176, and R183. Catalysis depends on D252, which acts as the Proton acceptor. Mg(2+) contacts are provided by N253 and D262. Residue D262 coordinates ATP.

It belongs to the SELO family. It depends on Mg(2+) as a cofactor. Mn(2+) is required as a cofactor.

The enzyme catalyses L-seryl-[protein] + ATP = 3-O-(5'-adenylyl)-L-seryl-[protein] + diphosphate. It catalyses the reaction L-threonyl-[protein] + ATP = 3-O-(5'-adenylyl)-L-threonyl-[protein] + diphosphate. It carries out the reaction L-tyrosyl-[protein] + ATP = O-(5'-adenylyl)-L-tyrosyl-[protein] + diphosphate. The catalysed reaction is L-histidyl-[protein] + UTP = N(tele)-(5'-uridylyl)-L-histidyl-[protein] + diphosphate. The enzyme catalyses L-seryl-[protein] + UTP = O-(5'-uridylyl)-L-seryl-[protein] + diphosphate. It catalyses the reaction L-tyrosyl-[protein] + UTP = O-(5'-uridylyl)-L-tyrosyl-[protein] + diphosphate. Functionally, nucleotidyltransferase involved in the post-translational modification of proteins. It can catalyze the addition of adenosine monophosphate (AMP) or uridine monophosphate (UMP) to a protein, resulting in modifications known as AMPylation and UMPylation. In Pseudomonas aeruginosa (strain LESB58), this protein is Protein nucleotidyltransferase YdiU.